The primary structure comprises 275 residues: Type III pantothenate kinase (275 aa).

9–16 (DIGNTRLK) serves as a coordination point for ATP. Residues Tyr-114 and 121 to 124 (GVDR) each bind substrate. The active-site Proton acceptor is the Asp-123. Thr-147 lines the ATP pocket. A substrate-binding site is contributed by Thr-209.

It belongs to the type III pantothenate kinase family. Homodimer. It depends on NH4(+) as a cofactor. The cofactor is K(+).

The protein resides in the cytoplasm. It catalyses the reaction (R)-pantothenate + ATP = (R)-4'-phosphopantothenate + ADP + H(+). It participates in cofactor biosynthesis; coenzyme A biosynthesis; CoA from (R)-pantothenate: step 1/5. Functionally, catalyzes the phosphorylation of pantothenate (Pan), the first step in CoA biosynthesis. This Cupriavidus pinatubonensis (strain JMP 134 / LMG 1197) (Cupriavidus necator (strain JMP 134)) protein is Type III pantothenate kinase.